The following is an 85-amino-acid chain: Large ribosomal subunit protein bL27 (85 aa).

The disordered stretch occupies residues 1-21 (MAHKKAAGSSRNGRDSESKRL).

Belongs to the bacterial ribosomal protein bL27 family.

The protein is Large ribosomal subunit protein bL27 of Chromohalobacter salexigens (strain ATCC BAA-138 / DSM 3043 / CIP 106854 / NCIMB 13768 / 1H11).